Here is a 201-residue protein sequence, read N- to C-terminus: CASP-like protein 2D1 (201 aa).

Residues 1 to 26 are Cytoplasmic-facing; that stretch reads MRSGEGSTAAAAAAEEEKVKVAAPFR. Residues 27–47 traverse the membrane as a helical segment; that stretch reads LAELGLRVCAVPLAVASVWEM. At 48–70 the chain is on the extracellular side; that stretch reads ATNKQVDETYGEVRFSDLSGFRY. Residues 71–91 form a helical membrane-spanning segment; that stretch reads LVWINAITAAYSVASILLSSC. The Cytoplasmic segment spans residues 92 to 98; that stretch reads RFITRFD. A helical transmembrane segment spans residues 99 to 119; it reads WLIFILDQASAYLLLTSASAA. Residues 120–148 lie on the Extracellular side of the membrane; that stretch reads AEVVYLAREGDREVSWGEVCSYFGRFCGA. The helical transmembrane segment at 149-169 threads the bilayer; sequence ATVSVALNAAALLCFMALSLI. The Cytoplasmic portion of the chain corresponds to 170–201; the sequence is SAFRVFTKFNPPSQSNSKQQLSQEQGKPVVSG. The span at 180 to 194 shows a compositional bias: polar residues; the sequence is PPSQSNSKQQLSQEQ. Positions 180–201 are disordered; the sequence is PPSQSNSKQQLSQEQGKPVVSG.

Belongs to the Casparian strip membrane proteins (CASP) family. Homodimer and heterodimers.

The protein resides in the cell membrane. This chain is CASP-like protein 2D1, found in Oryza sativa subsp. indica (Rice).